The following is a 494-amino-acid chain: uncharacterized protein (494 aa).

It belongs to the TPP enzyme family.

This is an uncharacterized protein from Methanocaldococcus jannaschii (strain ATCC 43067 / DSM 2661 / JAL-1 / JCM 10045 / NBRC 100440) (Methanococcus jannaschii).